The following is a 399-amino-acid chain: Tryptophan synthase beta chain (399 aa).

At Lys-92 the chain carries N6-(pyridoxal phosphate)lysine.

Belongs to the TrpB family. As to quaternary structure, tetramer of two alpha and two beta chains. The cofactor is pyridoxal 5'-phosphate.

The enzyme catalyses (1S,2R)-1-C-(indol-3-yl)glycerol 3-phosphate + L-serine = D-glyceraldehyde 3-phosphate + L-tryptophan + H2O. It participates in amino-acid biosynthesis; L-tryptophan biosynthesis; L-tryptophan from chorismate: step 5/5. The beta subunit is responsible for the synthesis of L-tryptophan from indole and L-serine. The chain is Tryptophan synthase beta chain from Nitrosomonas eutropha (strain DSM 101675 / C91 / Nm57).